Consider the following 761-residue polypeptide: Putative pentatricopeptide repeat-containing protein At2g02150 (761 aa).

17 PPR repeats span residues 141–175, 191–225, 226–260, 261–295, 296–330, 331–365, 366–400, 401–435, 436–470, 471–505, 506–540, 541–575, 576–606, 612–646, 647–681, 682–716, and 717–751; these read SVESYCIVAHILFCARMYYDANSVLKEMVLSKADC, GFGVFDALFSVLIDLGMLEEAIQCFSKMKRFRVFP, KTRSCNGLLHRFAKLGKTDDVKRFFKDMIGAGARP, TVFTYNIMIDCMCKEGDVEAARGLFEEMKFRGLVP, DTVTYNSMIDGFGKVGRLDDTVCFFEEMKDMCCEP, DVITYNALINCFCKFGKLPIGLEFYREMKGNGLKP, NVVSYSTLVDAFCKEGMMQQAIKFYVDMRRVGLVP, NEYTYTSLIDANCKIGNLSDAFRLGNEMLQVGVEW, NVVTYTALIDGLCDAERMKEAEELFGKMDTAGVIP, NLASYNALIHGFVKAKNMDRALELLNELKGRGIKP, DLLLYGTFIWGLCSLEKIEAAKVVMNEMKECGIKA, NSLIYTTLMDAYFKSGNPTEGLHLLDEMKELDIEV, TVVTFCVLIDGLCKNKLVSKAVDYFNRISND, NAAIFTAMIDGLCKDNQVEAATTLFEQMVQKGLVP, DRTAYTSLMDGNFKQGNVLEALALRDKMAEIGMKL, DLLAYTSLVWGLSHCNQLQKARSFLEEMIGEGIHP, and DEVLCISVLKKHYELGCIDEAVELQSYLMKHQLLT.

The protein belongs to the PPR family. P subfamily.

The polypeptide is Putative pentatricopeptide repeat-containing protein At2g02150 (Arabidopsis thaliana (Mouse-ear cress)).